Here is a 511-residue protein sequence, read N- to C-terminus: DNA nucleotidylexotransferase (511 aa).

Residues Met-1–Thr-26 form a disordered region. Residues Pro-11–Arg-17 carry the Nuclear localization signal motif. The region spanning Pro-27–Gln-124 is the BRCT domain. Ser-134 bears the Phosphoserine mark. Positions Ser-151–Ala-511 are mediates interaction with DNTTIP2. An involved in DNA binding region spans residues Val-258–Thr-262. A 2'-deoxyribonucleoside 5'-triphosphate is bound by residues Gly-333–Lys-338 and His-342–Asp-345. Mg(2+) contacts are provided by Asp-343, Asp-345, and Asp-435. Gly-450–Trp-451 provides a ligand contact to a 2'-deoxyribonucleoside 5'-triphosphate.

This sequence belongs to the DNA polymerase type-X family. In terms of assembly, interacts with PRP19 and DNTTIP1. Forms a ternary complex with DNTTIP2 and core histone. Released from this complex by PCNA. Interacts with TRERF1. The cofactor is Mg(2+).

The protein resides in the nucleus. The enzyme catalyses DNA(n) + a 2'-deoxyribonucleoside 5'-triphosphate = DNA(n+1) + diphosphate. In terms of biological role, template-independent DNA polymerase which catalyzes the random addition of deoxynucleoside 5'-triphosphate to the 3'-end of a DNA initiator. One of the in vivo functions of this enzyme is the addition of nucleotides at the junction (N region) of rearranged Ig heavy chain and T-cell receptor gene segments during the maturation of B- and T-cells. In Eulemur macaco (Black lemur), this protein is DNA nucleotidylexotransferase (DNTT).